Consider the following 160-residue polypeptide: Ribosomal RNA large subunit methyltransferase H (160 aa).

Residues Leu76 and Gly108 each contribute to the S-adenosyl-L-methionine site.

Belongs to the RNA methyltransferase RlmH family. As to quaternary structure, homodimer.

The protein localises to the cytoplasm. It carries out the reaction pseudouridine(1915) in 23S rRNA + S-adenosyl-L-methionine = N(3)-methylpseudouridine(1915) in 23S rRNA + S-adenosyl-L-homocysteine + H(+). Specifically methylates the pseudouridine at position 1915 (m3Psi1915) in 23S rRNA. The polypeptide is Ribosomal RNA large subunit methyltransferase H (Rhodopseudomonas palustris (strain HaA2)).